A 498-amino-acid chain; its full sequence is GTPase Der (498 aa).

EngA-type G domains follow at residues 3-167 (PVVA…FDDL) and 210-383 (IKLA…KSAT). Residues 9–16 (GRPNVGKS), 57–61 (DTGGI), 119–122 (NKID), 216–223 (GRPNVGKS), 263–267 (DTAGV), and 328–331 (NKWD) each bind GTP. The region spanning 384–468 (TRVGTSVLTR…PIRINFQNSD (85 aa)) is the KH-like domain.

Belongs to the TRAFAC class TrmE-Era-EngA-EngB-Septin-like GTPase superfamily. EngA (Der) GTPase family. Associates with the 50S ribosomal subunit.

Functionally, GTPase that plays an essential role in the late steps of ribosome biogenesis. This is GTPase Der from Vibrio campbellii (strain ATCC BAA-1116).